Reading from the N-terminus, the 288-residue chain is Hydroxyethylthiazole kinase (288 aa).

Methionine 55 lines the substrate pocket. Residues asparagine 131 and serine 177 each contribute to the ATP site. Glycine 204 contributes to the substrate binding site.

It belongs to the Thz kinase family. It depends on Mg(2+) as a cofactor.

The enzyme catalyses 5-(2-hydroxyethyl)-4-methylthiazole + ATP = 4-methyl-5-(2-phosphooxyethyl)-thiazole + ADP + H(+). It functions in the pathway cofactor biosynthesis; thiamine diphosphate biosynthesis; 4-methyl-5-(2-phosphoethyl)-thiazole from 5-(2-hydroxyethyl)-4-methylthiazole: step 1/1. Functionally, catalyzes the phosphorylation of the hydroxyl group of 4-methyl-5-beta-hydroxyethylthiazole (THZ). The chain is Hydroxyethylthiazole kinase from Haloquadratum walsbyi (strain DSM 16790 / HBSQ001).